The sequence spans 355 residues: Phosphoribosylformylglycinamidine cyclo-ligase (355 aa).

The protein belongs to the AIR synthase family.

The protein resides in the cytoplasm. The catalysed reaction is 2-formamido-N(1)-(5-O-phospho-beta-D-ribosyl)acetamidine + ATP = 5-amino-1-(5-phospho-beta-D-ribosyl)imidazole + ADP + phosphate + H(+). Its pathway is purine metabolism; IMP biosynthesis via de novo pathway; 5-amino-1-(5-phospho-D-ribosyl)imidazole from N(2)-formyl-N(1)-(5-phospho-D-ribosyl)glycinamide: step 2/2. This chain is Phosphoribosylformylglycinamidine cyclo-ligase, found in Hamiltonella defensa subsp. Acyrthosiphon pisum (strain 5AT).